The chain runs to 414 residues: Serine hydroxymethyltransferase (414 aa).

(6S)-5,6,7,8-tetrahydrofolate contacts are provided by residues L116 and 120–122 (GHL). K224 is subject to N6-(pyridoxal phosphate)lysine. (6S)-5,6,7,8-tetrahydrofolate contacts are provided by residues E240 and 348-350 (SPF).

This sequence belongs to the SHMT family. In terms of assembly, homodimer. The cofactor is pyridoxal 5'-phosphate.

Its subcellular location is the cytoplasm. The enzyme catalyses (6R)-5,10-methylene-5,6,7,8-tetrahydrofolate + glycine + H2O = (6S)-5,6,7,8-tetrahydrofolate + L-serine. The protein operates within one-carbon metabolism; tetrahydrofolate interconversion. It functions in the pathway amino-acid biosynthesis; glycine biosynthesis; glycine from L-serine: step 1/1. In terms of biological role, catalyzes the reversible interconversion of serine and glycine with tetrahydrofolate (THF) serving as the one-carbon carrier. This reaction serves as the major source of one-carbon groups required for the biosynthesis of purines, thymidylate, methionine, and other important biomolecules. Also exhibits THF-independent aldolase activity toward beta-hydroxyamino acids, producing glycine and aldehydes, via a retro-aldol mechanism. This is Serine hydroxymethyltransferase from Campylobacter fetus subsp. fetus (strain 82-40).